A 118-amino-acid polypeptide reads, in one-letter code: Ribonuclease P protein component (118 aa).

This sequence belongs to the RnpA family. As to quaternary structure, consists of a catalytic RNA component (M1 or rnpB) and a protein subunit.

It carries out the reaction Endonucleolytic cleavage of RNA, removing 5'-extranucleotides from tRNA precursor.. RNaseP catalyzes the removal of the 5'-leader sequence from pre-tRNA to produce the mature 5'-terminus. It can also cleave other RNA substrates such as 4.5S RNA. The protein component plays an auxiliary but essential role in vivo by binding to the 5'-leader sequence and broadening the substrate specificity of the ribozyme. This chain is Ribonuclease P protein component, found in Shewanella baltica (strain OS155 / ATCC BAA-1091).